The sequence spans 95 residues: Small ribosomal subunit protein bS6 (95 aa).

It belongs to the bacterial ribosomal protein bS6 family.

Binds together with bS18 to 16S ribosomal RNA. This chain is Small ribosomal subunit protein bS6, found in Oceanobacillus iheyensis (strain DSM 14371 / CIP 107618 / JCM 11309 / KCTC 3954 / HTE831).